A 356-amino-acid polypeptide reads, in one-letter code: Guanine nucleotide-binding protein alpha-17 subunit (356 aa).

The N-myristoyl glycine moiety is linked to residue Gly-2. Cys-4 carries S-palmitoyl cysteine lipidation. The G-alpha domain occupies 32 to 356 (SIVKLLLLGA…QKNLQKAGMM (325 aa)). Residues 35-48 (KLLLLGAGECGKST) form a G1 motif region. GTP is bound by residues 40–47 (GAGECGKS), 177–183 (LYSRVAT), 202–206 (DVGGQ), 271–274 (NKKD), and Ala-328. Mg(2+) contacts are provided by Ser-47 and Thr-183. A G2 motif region spans residues 175-183 (DILYSRVAT). Residues 198-207 (FRVFDVGGQR) are G3 motif. The G4 motif stretch occupies residues 267–274 (ILFMNKKD). The G5 motif stretch occupies residues 326 to 331 (TCATDT).

It belongs to the G-alpha family. As to quaternary structure, g proteins are composed of 3 units; alpha, beta and gamma. The alpha chain contains the guanine nucleotide binding site. As to expression, expressed in sensory neurons in the head and tail. Expressed in amphid AWC neurons, to a lesser extent in AWB and weakly in AWA, ASH and ADF neurons (head sensory neurons). Expressed in phasmid PHA and PHB neurons (tail sensory neurons).

Its subcellular location is the cell projection. It localises to the cilium. It is found in the dendrite. In terms of biological role, guanine nucleotide-binding proteins (G proteins) are involved as modulators or transducers in various transmembrane signaling systems. This specific G-alpha subunit plays an important role in olfaction and in cilia morphogenesis. Involved in chemotactic responses to attractants diacetyl, pyrazine, 2,4,5-trimethylthiazole, benzaldehyde, isoamyl alcohol, butanone and 2,3-pentanedione. Displays a redundant function with gpa-3 in chemotactic responses. Plays a role in the avoidance response to the noxious chemical quinine in ASH sensory neurons. Involved in avoidance responses to copper, sodium dodecyl sulfate and linoleic acid. Involved in osmotic avoidance and mechanosensory responses. Involved in specifying fan-like morphology of cilia of head sensory neurons AWC. Plays a role in the detection of preferred food sources by mediating the recognition of food odors in olfactory sensory neurons. The chain is Guanine nucleotide-binding protein alpha-17 subunit from Caenorhabditis elegans.